A 198-amino-acid polypeptide reads, in one-letter code: Probable GTP-binding protein EngB (198 aa).

The EngB-type G domain maps to 22–196 (NLSEIAFVGR…WNWIKGQAEL (175 aa)). Residues 30-37 (GRSNVGKS), 57-61 (GKTQT), 75-78 (DVPG), 142-145 (TKAD), and 175-177 (FSA) each bind GTP. Positions 37 and 59 each coordinate Mg(2+).

It belongs to the TRAFAC class TrmE-Era-EngA-EngB-Septin-like GTPase superfamily. EngB GTPase family. Mg(2+) serves as cofactor.

In terms of biological role, necessary for normal cell division and for the maintenance of normal septation. The sequence is that of Probable GTP-binding protein EngB from Oenococcus oeni (strain ATCC BAA-331 / PSU-1).